The chain runs to 356 residues: tRNA N6-adenosine threonylcarbamoyltransferase (356 aa).

2 residues coordinate Fe cation: His-115 and His-119. Substrate-binding positions include 138–142, Asp-171, Gly-184, and Asn-283; that span reads LVSGG. Residue Asp-311 coordinates Fe cation.

It belongs to the KAE1 / TsaD family. The cofactor is Fe(2+).

The protein resides in the cytoplasm. It catalyses the reaction L-threonylcarbamoyladenylate + adenosine(37) in tRNA = N(6)-L-threonylcarbamoyladenosine(37) in tRNA + AMP + H(+). Functionally, required for the formation of a threonylcarbamoyl group on adenosine at position 37 (t(6)A37) in tRNAs that read codons beginning with adenine. Is involved in the transfer of the threonylcarbamoyl moiety of threonylcarbamoyl-AMP (TC-AMP) to the N6 group of A37, together with TsaE and TsaB. TsaD likely plays a direct catalytic role in this reaction. This chain is tRNA N6-adenosine threonylcarbamoyltransferase, found in Prochlorococcus marinus subsp. pastoris (strain CCMP1986 / NIES-2087 / MED4).